A 104-amino-acid chain; its full sequence is Met repressor (104 aa).

This sequence belongs to the MetJ family. Homodimer.

The protein localises to the cytoplasm. Functionally, this regulatory protein, when combined with SAM (S-adenosylmethionine) represses the expression of the methionine regulon and of enzymes involved in SAM synthesis. In Shewanella oneidensis (strain ATCC 700550 / JCM 31522 / CIP 106686 / LMG 19005 / NCIMB 14063 / MR-1), this protein is Met repressor.